The chain runs to 323 residues: uncharacterized protein (323 aa).

Disordered stretches follow at residues 185–214 (AELM…GSSW) and 271–294 (GNII…YEKL).

It belongs to the IGBP1/TAP42 family.

This is an uncharacterized protein from Schizosaccharomyces pombe (strain 972 / ATCC 24843) (Fission yeast).